A 641-amino-acid chain; its full sequence is Bifunctional protein glk (641 aa).

The segment at 1-21 (MSTGAQTKAAEASQHADGPRL) is disordered. The segment at 1–340 (MSTGAQTKAA…QLSNRTGGAS (340 aa)) is glucokinase. An ATP-binding site is contributed by 23–28 (ADVGGT). The HTH rpiR-type domain occupies 341–417 (SAVFERIRQM…LKLATGLTGT (77 aa)). Residues 341–641 (SAVFERIRQM…SHGAAPAAKE (301 aa)) form a putative HTH-type transcriptional regulator region. A DNA-binding region (H-T-H motif) is located at residues 377-396 (IVDIARKADVSQPTVIRFCR). Residues 461–600 (AIDILNNARR…AVGVAIRRAS (140 aa)) enclose the SIS domain. The helical transmembrane segment at 576-596 (SMISRILHLVMIDILAVGVAI) threads the bilayer.

This sequence in the N-terminal section; belongs to the bacterial glucokinase family.

It localises to the membrane. It carries out the reaction D-glucose + ATP = D-glucose 6-phosphate + ADP + H(+). The protein is Bifunctional protein glk (glk) of Burkholderia thailandensis (strain ATCC 700388 / DSM 13276 / CCUG 48851 / CIP 106301 / E264).